The following is an 86-amino-acid chain: Small ribosomal subunit protein bS20 (86 aa).

The protein belongs to the bacterial ribosomal protein bS20 family.

Binds directly to 16S ribosomal RNA. The polypeptide is Small ribosomal subunit protein bS20 (Rhodococcus erythropolis (strain PR4 / NBRC 100887)).